The following is a 102-amino-acid chain: Acid shock protein (102 aa).

A signal peptide spans 1 to 21 (MKKVLALVVAAAMGLSSAAFA). A compositionally biased stretch (low complexity) spans 22-41 (AETATTPAPTATTTKAAPAK). A propeptide spanning residues 22 to 58 (AETATTPAPTATTTKAAPAKTTHHKKQHKAAPAQKAQ) is cleaved from the precursor. The interval 22–102 (AETATTPAPT…PAKPAAQPAA (81 aa)) is disordered. A compositionally biased stretch (basic residues) spans 80–90 (AAKKHAKKHSH). Over residues 91–102 (QQPAKPAAQPAA) the composition is skewed to low complexity.

Belongs to the Asr family. Proteolytic processing gives rise to the active protein.

The protein localises to the periplasm. Functionally, required for growth and/or survival at acidic conditions. The polypeptide is Acid shock protein (Escherichia coli O45:K1 (strain S88 / ExPEC)).